Here is a 90-residue protein sequence, read N- to C-terminus: Small ribosomal subunit protein bS20 (90 aa).

A disordered region spans residues 1-21; sequence MANHKSALKRVRQTKKRTERN.

Belongs to the bacterial ribosomal protein bS20 family.

Its function is as follows. Binds directly to 16S ribosomal RNA. The sequence is that of Small ribosomal subunit protein bS20 from Nitratiruptor sp. (strain SB155-2).